The chain runs to 282 residues: Pantothenate synthetase (282 aa).

30 to 37 (MGFLHDGH) contributes to the ATP binding site. The active-site Proton donor is His37. Gln60 contributes to the (R)-pantoate binding site. Gln60 contacts beta-alanine. 146–149 (GQKD) contributes to the ATP binding site. Gln152 contacts (R)-pantoate. Residues Ile175 and 183-186 (KSSR) each bind ATP.

Belongs to the pantothenate synthetase family. Homodimer.

Its subcellular location is the cytoplasm. It carries out the reaction (R)-pantoate + beta-alanine + ATP = (R)-pantothenate + AMP + diphosphate + H(+). It functions in the pathway cofactor biosynthesis; (R)-pantothenate biosynthesis; (R)-pantothenate from (R)-pantoate and beta-alanine: step 1/1. Its function is as follows. Catalyzes the condensation of pantoate with beta-alanine in an ATP-dependent reaction via a pantoyl-adenylate intermediate. The chain is Pantothenate synthetase from Campylobacter jejuni subsp. doylei (strain ATCC BAA-1458 / RM4099 / 269.97).